The sequence spans 1406 residues: DNA-directed RNA polymerase subunit beta' (1406 aa).

Zn(2+) contacts are provided by Cys70, Cys72, Cys85, and Cys88. 3 residues coordinate Mg(2+): Asp460, Asp462, and Asp464. The Zn(2+) site is built by Cys814, Cys888, Cys895, and Cys898.

The protein belongs to the RNA polymerase beta' chain family. In terms of assembly, the RNAP catalytic core consists of 2 alpha, 1 beta, 1 beta' and 1 omega subunit. When a sigma factor is associated with the core the holoenzyme is formed, which can initiate transcription. Mg(2+) serves as cofactor. The cofactor is Zn(2+).

The enzyme catalyses RNA(n) + a ribonucleoside 5'-triphosphate = RNA(n+1) + diphosphate. DNA-dependent RNA polymerase catalyzes the transcription of DNA into RNA using the four ribonucleoside triphosphates as substrates. This Photorhabdus laumondii subsp. laumondii (strain DSM 15139 / CIP 105565 / TT01) (Photorhabdus luminescens subsp. laumondii) protein is DNA-directed RNA polymerase subunit beta'.